We begin with the raw amino-acid sequence, 289 residues long: Putative 2-aminoethylphosphonate transport system permease protein PhnU (289 aa).

Helical transmembrane passes span 19 to 39, 76 to 96, 111 to 131, 150 to 170, 202 to 222, and 254 to 274; these read WLLL…SLIV, FFAT…LVFI, FIAL…GSAG, FLYS…PLVM, VIFP…LLLT, and YTVA…LFSL. An ABC transmembrane type-1 domain is found at 68–275; that stretch reads LLNTLQIAFF…VLSLGLFSLY (208 aa).

The protein belongs to the binding-protein-dependent transport system permease family.

It localises to the cell inner membrane. Functionally, probably part of the PhnSTUV complex (TC 3.A.1.11.5) involved in 2-aminoethylphosphonate import. Probably responsible for the translocation of the substrate across the membrane. The sequence is that of Putative 2-aminoethylphosphonate transport system permease protein PhnU (phnU) from Salmonella paratyphi A (strain ATCC 9150 / SARB42).